Consider the following 325-residue polypeptide: tRNA-dihydrouridine(16) synthase (325 aa).

FMN is bound by residues 12–14 (PMQ) and glutamine 73. The active-site Proton donor is cysteine 103. Residues lysine 144, 205–207 (NGE), and 229–230 (GR) each bind FMN.

It belongs to the Dus family. DusC subfamily. Requires FMN as cofactor.

The catalysed reaction is 5,6-dihydrouridine(16) in tRNA + NADP(+) = uridine(16) in tRNA + NADPH + H(+). It catalyses the reaction 5,6-dihydrouridine(16) in tRNA + NAD(+) = uridine(16) in tRNA + NADH + H(+). In terms of biological role, catalyzes the synthesis of 5,6-dihydrouridine (D), a modified base found in the D-loop of most tRNAs, via the reduction of the C5-C6 double bond in target uridines. Specifically modifies U16 in tRNAs. The protein is tRNA-dihydrouridine(16) synthase of Haemophilus ducreyi (strain 35000HP / ATCC 700724).